A 177-amino-acid polypeptide reads, in one-letter code: uncharacterized protein (177 aa).

This is an uncharacterized protein from Acanthamoeba polyphaga mimivirus (APMV).